Reading from the N-terminus, the 807-residue chain is Glycerol-3-phosphate acyltransferase (807 aa).

The HXXXXD motif motif lies at 308 to 313 (CHRSHM).

The protein belongs to the GPAT/DAPAT family.

Its subcellular location is the cell inner membrane. The enzyme catalyses sn-glycerol 3-phosphate + an acyl-CoA = a 1-acyl-sn-glycero-3-phosphate + CoA. Its pathway is phospholipid metabolism; CDP-diacylglycerol biosynthesis; CDP-diacylglycerol from sn-glycerol 3-phosphate: step 1/3. This Shewanella sp. (strain MR-7) protein is Glycerol-3-phosphate acyltransferase.